A 154-amino-acid polypeptide reads, in one-letter code: MAQGEQGALAQFGEWLWSNPIEPDQNDELVDAQEEEGQILYLDQQAGLRYSYSQSTTLRPTPQGQSSSVPTFRNAQRFQVEYSSPTTFTRSQTSRLSLSHTRPPLQSAQCLLNSTLGAHNQPWVATLTHSPSQNQQPKPSPPNRLTGRNSGRVR.

Disordered regions lie at residues 83–103 (SSPT…HTRP) and 123–154 (WVAT…GRVR).

The protein belongs to the luteoviruses movement protein family.

Transports viral genome to neighboring plant cells directly through plasmosdesmata, without any budding. The movement protein allows efficient cell to cell propagation, by bypassing the host cell wall barrier. This Barley yellow dwarf virus (isolate MAV) (BYDV) protein is Movement protein.